We begin with the raw amino-acid sequence, 441 residues long: MSHEEDLIDYSDEELQTTDAAATTAAPAANGAQDKKGDLTVSGGRPDKKGSYVGIHSTGFRDFLLKGELLRAITDCGFEHPSEVQQVCIPTAILNVDVLCQAKSGLGKTAVFVLTTLHQLEPVPGECSVLVMCHTRELAYQIKNEYARFSKYLPDVKTAVFYGGTPIQKDIEVLSNKESYPNIVVGTPGRLNALVREKKLSLRNVKAFVLDECDKMLDQIDMRRDVQEIFRATPADKQVMMFSATLSQEIRPICKKFMRNPLEVYVDDDTKLTLHGLQQYYIKLSESEKNRKLNELLDSLEFNQVIIFVKSTLRANELDKLLRECNFPSIAVHSGVSQEERIKRYKEFKEFNKRICVATDVFGRGIDIERINLAINYDLPADADSYLHRVGRAGRFGTKGLSISFVSSEEDEKVLKEIEKRFEVALPEYPEGGVDSSTYMA.

Residues 19 to 29 show a composition bias toward low complexity; that stretch reads DAAATTAAPAA. Positions 19–43 are disordered; that stretch reads DAAATTAAPAANGAQDKKGDLTVSG. Positions 58 to 86 match the Q motif motif; the sequence is TGFRDFLLKGELLRAITDCGFEHPSEVQQ. One can recognise a Helicase ATP-binding domain in the interval 89–264; sequence IPTAILNVDV…KKFMRNPLEV (176 aa). An ATP-binding site is contributed by 102–109; the sequence is AKSGLGKT. Residues 211–214 carry the DEAD box motif; it reads DECD. Residues 276 to 437 form the Helicase C-terminal domain; sequence GLQQYYIKLS…EYPEGGVDSS (162 aa).

It belongs to the DEAD box helicase family. DECD subfamily.

Its subcellular location is the nucleus. The catalysed reaction is ATP + H2O = ADP + phosphate + H(+). ATP-binding RNA helicase involved in transcription elongation and required for the export of mRNA out of the nucleus. SUB2 also plays a role in pre-mRNA splicing and spliceosome assembly. May be involved in rDNA and telomeric silencing, and maintenance of genome integrity. In Neosartorya fischeri (strain ATCC 1020 / DSM 3700 / CBS 544.65 / FGSC A1164 / JCM 1740 / NRRL 181 / WB 181) (Aspergillus fischerianus), this protein is ATP-dependent RNA helicase sub2 (sub2).